A 357-amino-acid polypeptide reads, in one-letter code: Putative lipopolysaccharide heptosyltransferase 4 (357 aa).

The enzyme catalyses alpha-D-Glc-(1-&gt;2)-alpha-D-Glc-(1-&gt;3)-[alpha-D-Gal-(1-&gt;6)]-alpha-D-Glc-(1-&gt;3)-[L-alpha-D-Hep-(1-&gt;7)]-4-O-PO3(2-)-L-alpha-D-Hep-(1-&gt;3)-4-O-PO3(2-)-L-alpha-D-Hep-(1-&gt;5)-[alpha-Kdo-(2-&gt;4)]-alpha-Kdo-(2-&gt;6)-lipid A + ADP-L-glycero-beta-D-manno-heptose = lipid A-core + ADP + H(+). It participates in bacterial outer membrane biogenesis; LPS core biosynthesis. Functionally, transferase involved in the biosynthesis of the core oligosaccharide region of lipopolysaccharide (LPS). May catalyze the addition of the terminal heptose (heptose IV) to the outer-core glucose III, the last step of the lipid A-core oligosaccharide biosynthesis. The protein is Putative lipopolysaccharide heptosyltransferase 4 of Escherichia coli (strain K12).